The primary structure comprises 530 residues: Bifunctional purine biosynthesis protein PurH (530 aa).

The region spanning Met-1–Val-148 is the MGS-like domain.

This sequence belongs to the PurH family.

It carries out the reaction (6R)-10-formyltetrahydrofolate + 5-amino-1-(5-phospho-beta-D-ribosyl)imidazole-4-carboxamide = 5-formamido-1-(5-phospho-D-ribosyl)imidazole-4-carboxamide + (6S)-5,6,7,8-tetrahydrofolate. The catalysed reaction is IMP + H2O = 5-formamido-1-(5-phospho-D-ribosyl)imidazole-4-carboxamide. Its pathway is purine metabolism; IMP biosynthesis via de novo pathway; 5-formamido-1-(5-phospho-D-ribosyl)imidazole-4-carboxamide from 5-amino-1-(5-phospho-D-ribosyl)imidazole-4-carboxamide (10-formyl THF route): step 1/1. It participates in purine metabolism; IMP biosynthesis via de novo pathway; IMP from 5-formamido-1-(5-phospho-D-ribosyl)imidazole-4-carboxamide: step 1/1. This Vibrio cholerae serotype O1 (strain M66-2) protein is Bifunctional purine biosynthesis protein PurH.